A 1755-amino-acid chain; its full sequence is Transposon Ty1-GR2 Gag-Pol polyprotein (1755 aa).

The segment covering 1-16 has biased composition (low complexity); the sequence is MESQQLSQHSHISHGS. Disordered regions lie at residues 1-93, 126-173, and 352-421; these read MESQ…MMTQ, PQSQ…RPPP, and GSRN…SKST. 2 stretches are compositionally biased toward polar residues: residues 48–60 and 127–152; these read TKANSQQTTTPAS and QSQFPQYPSSVGTPLSTPSPESGNTF. Residues 153–165 show a composition bias toward low complexity; sequence TDSSSADSDMTST. The RNA-binding stretch occupies residues 299 to 401; the sequence is NNGIHINNKV…NSKSKTARAH (103 aa). A compositionally biased stretch (low complexity) spans 402–418; that stretch reads NVSTSNNSPSTDNDSIS. Serine 416 carries the post-translational modification Phosphoserine. Catalysis depends on aspartate 461, which acts as the For protease activity; shared with dimeric partner. Residues 583–640 form an integrase-type zinc finger-like region; the sequence is NVHTSESTRKYPYPFIHRMLAHANAQTIRYSLKNNTITYFNESDVDWSSAIDYQCPDC. The Integrase catalytic domain maps to 660 to 835; that stretch reads NSYEPFQYLH…AGLDISTLLP (176 aa). Residues aspartate 671 and aspartate 736 each contribute to the Mg(2+) site. Disordered stretches follow at residues 956-1087, 1092-1111, and 1130-1187; these read SKAV…ETEK, RSPSIDASPPENNSSHNIVP, and DLPL…DNET. Positions 960 to 969 are enriched in low complexity; the sequence is SPTDSTPPST. The span at 1005 to 1015 shows a compositional bias: polar residues; sequence STPQISNIEST. Residues 1038-1053 show a composition bias toward basic and acidic residues; the sequence is ESSHASKSKDFRHSDS. Polar residues-rich tracts occupy residues 1054-1082 and 1101-1111; these read YSENETNHTNVPISSTGGTNNKTVPQISD and PENNSSHNIVP. Residues 1178-1212 carry the Bipartite nuclear localization signal motif; it reads KKRSLEDNETEIKVSRDTWNTKNMRSLEPPRSKKR. The Reverse transcriptase Ty1/copia-type domain occupies 1338–1476; the sequence is NNYYITQLDI…DILGLEIKYQ (139 aa). 6 residues coordinate Mg(2+): aspartate 1346, aspartate 1427, aspartate 1428, aspartate 1610, glutamate 1652, and aspartate 1685. The 143-residue stretch at 1610-1752 folds into the RNase H Ty1/copia-type domain; the sequence is DASYGNQPYY…IKTFKLLTNK (143 aa).

In terms of assembly, the capsid protein forms a homotrimer, from which the VLPs are assembled. The protease is a homodimer, whose active site consists of two apposed aspartic acid residues. Initially, virus-like particles (VLPs) are composed of the structural unprocessed proteins Gag and Gag-Pol, and also contain the host initiator methionine tRNA (tRNA(i)-Met) which serves as a primer for minus-strand DNA synthesis, and a dimer of genomic Ty RNA. Processing of the polyproteins occurs within the particle and proceeds by an ordered pathway, called maturation. First, the protease (PR) is released by autocatalytic cleavage of the Gag-Pol polyprotein yielding capsid protein p45 and a Pol-p154 precursor protein. This cleavage is a prerequisite for subsequent processing of Pol-p154 at the remaining sites to release the mature structural and catalytic proteins. Maturation takes place prior to the RT reaction and is required to produce transposition-competent VLPs.

It is found in the cytoplasm. It localises to the nucleus. It catalyses the reaction DNA(n) + a 2'-deoxyribonucleoside 5'-triphosphate = DNA(n+1) + diphosphate. It carries out the reaction Endonucleolytic cleavage to 5'-phosphomonoester.. Capsid protein (CA) is the structural component of the virus-like particle (VLP), forming the shell that encapsulates the retrotransposons dimeric RNA genome. The particles are assembled from trimer-clustered units and there are holes in the capsid shells that allow for the diffusion of macromolecules. CA also has nucleocapsid-like chaperone activity, promoting primer tRNA(i)-Met annealing to the multipartite primer-binding site (PBS), dimerization of Ty1 RNA and initiation of reverse transcription. Its function is as follows. The aspartyl protease (PR) mediates the proteolytic cleavages of the Gag and Gag-Pol polyproteins after assembly of the VLP. Functionally, reverse transcriptase/ribonuclease H (RT) is a multifunctional enzyme that catalyzes the conversion of the retro-elements RNA genome into dsDNA within the VLP. The enzyme displays a DNA polymerase activity that can copy either DNA or RNA templates, and a ribonuclease H (RNase H) activity that cleaves the RNA strand of RNA-DNA heteroduplexes during plus-strand synthesis and hydrolyzes RNA primers. The conversion leads to a linear dsDNA copy of the retrotransposon that includes long terminal repeats (LTRs) at both ends. In terms of biological role, integrase (IN) targets the VLP to the nucleus, where a subparticle preintegration complex (PIC) containing at least integrase and the newly synthesized dsDNA copy of the retrotransposon must transit the nuclear membrane. Once in the nucleus, integrase performs the integration of the dsDNA into the host genome. This is Transposon Ty1-GR2 Gag-Pol polyprotein (TY1B-GR2) from Saccharomyces cerevisiae (strain ATCC 204508 / S288c) (Baker's yeast).